Consider the following 60-residue polypeptide: Large ribosomal subunit protein uL30 (60 aa).

It belongs to the universal ribosomal protein uL30 family. As to quaternary structure, part of the 50S ribosomal subunit.

This chain is Large ribosomal subunit protein uL30, found in Pediococcus pentosaceus (strain ATCC 25745 / CCUG 21536 / LMG 10740 / 183-1w).